The following is a 215-amino-acid chain: Adenylate kinase (215 aa).

Residue glycine 10 to threonine 15 participates in ATP binding. The interval serine 30–valine 59 is NMP. Residues threonine 31, arginine 36, lysine 57 to valine 59, glycine 85 to arginine 88, and glutamine 92 contribute to the AMP site. The tract at residues glycine 122–aspartate 159 is LID. Residues arginine 123 and threonine 132–tyrosine 133 contribute to the ATP site. AMP is bound by residues arginine 156 and arginine 167. Residue lysine 200 participates in ATP binding.

This sequence belongs to the adenylate kinase family. In terms of assembly, monomer.

It localises to the cytoplasm. The enzyme catalyses AMP + ATP = 2 ADP. The protein operates within purine metabolism; AMP biosynthesis via salvage pathway; AMP from ADP: step 1/1. Functionally, catalyzes the reversible transfer of the terminal phosphate group between ATP and AMP. Plays an important role in cellular energy homeostasis and in adenine nucleotide metabolism. The protein is Adenylate kinase of Haemophilus ducreyi (strain 35000HP / ATCC 700724).